The following is a 110-amino-acid chain: MINNVGIDIVENKRIKLKKEFIIKVLSTNEIQTFNTKTKKQKKEFLAGRWAVKEAIIKTLDQAISMNKIDIEYVNQKPVIQNKELQNILISISHEKKYAIGIALKQSDNK.

2 residues coordinate Mg(2+): aspartate 8 and glutamate 54.

It belongs to the P-Pant transferase superfamily. AcpS family. The cofactor is Mg(2+).

The protein localises to the cytoplasm. It carries out the reaction apo-[ACP] + CoA = holo-[ACP] + adenosine 3',5'-bisphosphate + H(+). Transfers the 4'-phosphopantetheine moiety from coenzyme A to a Ser of acyl-carrier-protein. In Mycoplasma mycoides subsp. mycoides SC (strain CCUG 32753 / NCTC 10114 / PG1), this protein is Holo-[acyl-carrier-protein] synthase.